A 129-amino-acid chain; its full sequence is Ribosome-binding factor A (129 aa).

This sequence belongs to the RbfA family. In terms of assembly, monomer. Binds 30S ribosomal subunits, but not 50S ribosomal subunits or 70S ribosomes.

The protein resides in the cytoplasm. Its function is as follows. One of several proteins that assist in the late maturation steps of the functional core of the 30S ribosomal subunit. Associates with free 30S ribosomal subunits (but not with 30S subunits that are part of 70S ribosomes or polysomes). Required for efficient processing of 16S rRNA. May interact with the 5'-terminal helix region of 16S rRNA. This is Ribosome-binding factor A from Desulfosudis oleivorans (strain DSM 6200 / JCM 39069 / Hxd3) (Desulfococcus oleovorans).